The primary structure comprises 299 residues: 4-hydroxy-tetrahydrodipicolinate synthase (299 aa).

Pyruvate is bound at residue T44. Y133 serves as the catalytic Proton donor/acceptor. Residue K162 is the Schiff-base intermediate with substrate of the active site. A pyruvate-binding site is contributed by I204.

Belongs to the DapA family. As to quaternary structure, homotetramer; dimer of dimers.

The protein localises to the cytoplasm. The enzyme catalyses L-aspartate 4-semialdehyde + pyruvate = (2S,4S)-4-hydroxy-2,3,4,5-tetrahydrodipicolinate + H2O + H(+). The protein operates within amino-acid biosynthesis; L-lysine biosynthesis via DAP pathway; (S)-tetrahydrodipicolinate from L-aspartate: step 3/4. Functionally, catalyzes the condensation of (S)-aspartate-beta-semialdehyde [(S)-ASA] and pyruvate to 4-hydroxy-tetrahydrodipicolinate (HTPA). This Thermus thermophilus (strain ATCC BAA-163 / DSM 7039 / HB27) protein is 4-hydroxy-tetrahydrodipicolinate synthase.